A 170-amino-acid polypeptide reads, in one-letter code: Calcineurin subunit B type 2 (170 aa).

EF-hand domains follow at residues 18-46, 50-85, 87-122, and 128-163; these read DEIR…FMSL, QQNP…FSVK, DKLS…MVGN, and QLQQ…TDIH. Ca(2+) is bound by residues aspartate 31, aspartate 33, serine 35, glutamate 42, aspartate 63, aspartate 65, asparagine 67, glutamate 69, glutamate 74, aspartate 100, aspartate 102, aspartate 104, tyrosine 106, glutamate 111, aspartate 141, aspartate 143, aspartate 145, lysine 147, and glutamate 152. At serine 35 the chain carries Phosphoserine.

The protein belongs to the calcineurin regulatory subunit family. Composed of a catalytic subunit (A) and a regulatory subunit (B). Interacts with sra.

Its function is as follows. Calcineurin is a calcium-binding and calmodulin-binding protein found in all cells from yeast to mammals, and a calcium-dependent, calmodulin-stimulated protein phosphatase. In Drosophila melanogaster (Fruit fly), this protein is Calcineurin subunit B type 2 (CanB2).